The primary structure comprises 141 residues: NADPH-dependent 7-cyano-7-deazaguanine reductase (141 aa).

Cys56 (thioimide intermediate) is an active-site residue. Asp63 acts as the Proton donor in catalysis. Substrate-binding positions include 78-80 and 97-98; these read VEL and HE.

It belongs to the GTP cyclohydrolase I family. QueF type 1 subfamily.

The protein resides in the cytoplasm. The enzyme catalyses 7-aminomethyl-7-carbaguanine + 2 NADP(+) = 7-cyano-7-deazaguanine + 2 NADPH + 3 H(+). It participates in tRNA modification; tRNA-queuosine biosynthesis. Catalyzes the NADPH-dependent reduction of 7-cyano-7-deazaguanine (preQ0) to 7-aminomethyl-7-deazaguanine (preQ1). The sequence is that of NADPH-dependent 7-cyano-7-deazaguanine reductase from Trichodesmium erythraeum (strain IMS101).